Consider the following 205-residue polypeptide: Ribonuclease HII (205 aa).

In terms of domain architecture, RNase H type-2 spans 1-203 (MKAGIDEAGK…VSNLRQKTLD (203 aa)). A divalent metal cation contacts are provided by Asp6 and Glu7. Residue Arg46 coordinates substrate. Asp101 contributes to the a divalent metal cation binding site. Substrate contacts are provided by Lys143, Arg146, and Tyr164.

The protein belongs to the RNase HII family. Mn(2+) serves as cofactor. It depends on Mg(2+) as a cofactor.

It is found in the cytoplasm. It carries out the reaction Endonucleolytic cleavage to 5'-phosphomonoester.. In terms of biological role, endonuclease that specifically degrades the RNA of RNA-DNA hybrids. This chain is Ribonuclease HII (rnhB), found in Archaeoglobus fulgidus (strain ATCC 49558 / DSM 4304 / JCM 9628 / NBRC 100126 / VC-16).